Reading from the N-terminus, the 166-residue chain is Macrocypin-5a (166 aa).

The interval 20 to 39 is disordered; it reads NIPGGMYASSKDGKDEPVTA.

The protein belongs to the protease inhibitor I85 family.

Inhibits papain and cysteine cathepsin endopeptidases, and also inhibits cathepsins B and H, which exhibit both exopeptidase and endopeptidase activities. This is Macrocypin-5a from Macrolepiota procera (Parasol mushroom).